The following is a 1005-amino-acid chain: Protein TIC 214 (1005 aa).

The next 6 helical transmembrane spans lie at valine 25–leucine 45, phenylalanine 67–leucine 87, histidine 91–glycine 111, serine 131–glycine 151, phenylalanine 177–tryptophan 197, and leucine 304–tyrosine 324. Disordered stretches follow at residues valine 457 to glutamate 481 and lysine 767 to glutamine 833. Residues lysine 783–serine 810 are compositionally biased toward basic residues. The segment covering lysine 811–serine 824 has biased composition (basic and acidic residues).

The protein belongs to the TIC214 family. Part of the Tic complex.

The protein localises to the plastid. Its subcellular location is the chloroplast inner membrane. In terms of biological role, involved in protein precursor import into chloroplasts. May be part of an intermediate translocation complex acting as a protein-conducting channel at the inner envelope. This is Protein TIC 214 from Oenothera berteroana (Bertero's evening primrose).